The chain runs to 314 residues: Protein phosphatase PTC7 homolog fig (314 aa).

One can recognise a PPM-type phosphatase domain in the interval 43–309 (PYLVTVVQGR…DDITLILSSV (267 aa)). Mn(2+) contacts are provided by D87, G88, and D232.

This sequence belongs to the PP2C family. It depends on Mg(2+) as a cofactor. Requires Mn(2+) as cofactor.

The enzyme catalyses O-phospho-L-seryl-[protein] + H2O = L-seryl-[protein] + phosphate. It catalyses the reaction O-phospho-L-threonyl-[protein] + H2O = L-threonyl-[protein] + phosphate. The polypeptide is Protein phosphatase PTC7 homolog fig (Drosophila melanogaster (Fruit fly)).